The primary structure comprises 425 residues: MSSIREEMVTSAVEFLKNPQIADSPLAKKIEFIESKGLNEAEVKEALLRSQGGNGSSSVASQVSSYSPSASQSSVAPSPPPFPDHYRNAPPLPERDWKDYFVMATATAGVSFGLYKVISNYVLPKLLPPSKEAIELDKEAIDREFTRVEALLNTFEEDQKAFYEEQREKSGKIEDTLTEIDAIISKTNEKNLNNEESLKYLKLEIESIKNTLMKNIDSQKSTISSELGSIEAQLDELKKLIVAKPEDEPIRAAPQPSLTTGANSLTSESSGRSSIPHSQSVPIRTQLTTPPSDSDTSGPAKLHIPPATSIPSLKDILRKEKNRTVDTFSKSNLGKDLESVAQSDPDKVEKYEGRRDLKSLERPEEDEKKEDDVEDGGDKDKLASSLESVKLPPSSEQVQAPAPKERTSSSSSRSGIPAWQLAAQS.

2 disordered regions span residues 49–89 and 247–425; these read RSQG…YRNA and DEPI…AAQS. Over residues 56-76 the composition is skewed to low complexity; the sequence is SSSVASQVSSYSPSASQSSVA. Residues 89–97 carry the SH3-binding motif; that stretch reads APPLPERDW. A compositionally biased stretch (polar residues) spans 256–297; that stretch reads PSLTTGANSLTSESSGRSSIPHSQSVPIRTQLTTPPSDSDTS. 2 stretches are compositionally biased toward basic and acidic residues: residues 315–324 and 333–366; these read DILRKEKNRT and LGKDLESVAQSDPDKVEKYEGRRDLKSLERPEED.

The protein belongs to the peroxin-14 family. In terms of assembly, interacts with PEX13 (via SH3 domain); forming the PEX13-PEX14 docking complex. Interacts with PEX5 (via WxxxF/Y motifs). Interacts with PEX20 (via WxxxF/Y motifs). Interacts with PEX3, PEX7, PEX8 and PEX17. Post-translationally, phosphorylated on serine or threonine residues.

It localises to the peroxisome membrane. Its function is as follows. Component of the PEX13-PEX14 docking complex, a translocon channel that specifically mediates the import of peroxisomal cargo proteins bound to PEX5 or PEX20 receptors. The PEX13-PEX14 docking complex forms a large import pore which can be opened to a diameter of about 9 nm. Mechanistically, PEX5 (or PEX20) receptor along with cargo proteins associates with the PEX14 subunit of the PEX13-PEX14 docking complex in the cytosol, leading to the insertion of the receptor into the organelle membrane with the concomitant translocation of the cargo into the peroxisome matrix. The protein is Peroxisomal membrane protein PEX14 of Komagataella pastoris (Yeast).